Reading from the N-terminus, the 624-residue chain is Polycomb group protein EMF2A (624 aa).

The C2H2-type zinc-finger motif lies at 338–359; that stretch reads CPFCLVRCGNFKGLECHMTSSH. Residues 420-445 are disordered; sequence DAHIMESGSPEETQAESEDDVQEENE. A compositionally biased stretch (acidic residues) spans 432–445; that stretch reads TQAESEDDVQEENE. The interval 474–609 is VEFS-box; that stretch reads LSANRADPRN…SARTMDTCNR (136 aa).

It belongs to the VEFS (VRN2-EMF2-FIS2-SU(Z)12) family. Component of the polycomb repressive complex 2 (PRC2), which methylates 'Lys-27' residues of histone H3 (H3K27me3), leading to transcriptional repression of the affected target gene. As to expression, widely expressed. Highly expressed in shoot apical meristem and inflorescence meristem. Expressed in roots, leaves and immature seeds.

Its function is as follows. Polycomb group (PcG) protein. PcG proteins act by forming multiprotein complexes, which are required to maintain the transcriptionally repressive state of homeotic genes throughout development. PcG proteins are not required to initiate repression, but to maintain it during later stages of development. They act via the methylation of histones, rendering chromatin heritably changed in its expressibility. This Oryza sativa subsp. japonica (Rice) protein is Polycomb group protein EMF2A.